The chain runs to 74 residues: Ubiquitin-like protein FUBI (74 aa).

This sequence belongs to the ubiquitin family.

Functionally, confers arsenite resistance. The polypeptide is Ubiquitin-like protein FUBI (FAU) (Cricetulus griseus (Chinese hamster)).